Here is a 172-residue protein sequence, read N- to C-terminus: Resuscitation-promoting factor RpfE (172 aa).

A signal peptide spans 1–28 (MKNARTTLIAAAIAGTLVTTSPAGIANA). Residues 33–89 (LDPNAAAGPDAVGFDPNLPPAPDAAPVDTPPAPEDAGFDPNLPPPLAPDFLSPPAEE) form a disordered region. The segment covering 49-65 (NLPPAPDAAPVDTPPAP) has biased composition (pro residues).

It belongs to the transglycosylase family. Rpf subfamily. Interacts with RipA.

Factor that stimulates resuscitation of dormant cells. Has peptidoglycan (PG) hydrolytic activity. Active in the pM concentration range. Has little to no effect on actively-growing cells. PG fragments could either directly activate the resuscitation pathway of dormant bacteria or serve as a substrate for endogenous Rpf, resulting in low molecular weight products with resuscitation activity. In terms of biological role, stimulates growth of stationary phase M.bovis (a slow-growing Mycobacterium), reduces the lag phase of diluted fast-growers M.smegmatis and Micrococcus luteus. Sequential gene disruption indicates RpfB and RpfE are higher than RpfD and RpfC in functional hierarchy. The chain is Resuscitation-promoting factor RpfE (rpfE) from Mycobacterium tuberculosis (strain ATCC 25618 / H37Rv).